An 84-amino-acid polypeptide reads, in one-letter code: Small ribosomal subunit protein uS17 (84 aa).

Belongs to the universal ribosomal protein uS17 family. In terms of assembly, part of the 30S ribosomal subunit.

Functionally, one of the primary rRNA binding proteins, it binds specifically to the 5'-end of 16S ribosomal RNA. The sequence is that of Small ribosomal subunit protein uS17 from Blochmanniella pennsylvanica (strain BPEN).